The chain runs to 454 residues: Allantoinase (454 aa).

Zn(2+)-binding residues include His-60, His-62, Lys-147, His-183, His-239, and Asp-312. Lys-147 carries the N6-carboxylysine modification.

This sequence belongs to the metallo-dependent hydrolases superfamily. Allantoinase family. As to quaternary structure, homotetramer. The cofactor is Zn(2+). Carboxylation allows a single lysine to coordinate two zinc ions.

The enzyme catalyses (S)-allantoin + H2O = allantoate + H(+). It participates in nitrogen metabolism; (S)-allantoin degradation; allantoate from (S)-allantoin: step 1/1. In terms of biological role, catalyzes the conversion of allantoin (5-ureidohydantoin) to allantoic acid by hydrolytic cleavage of the five-member hydantoin ring. The protein is Allantoinase of Rubrobacter xylanophilus (strain DSM 9941 / JCM 11954 / NBRC 16129 / PRD-1).